Consider the following 368-residue polypeptide: Molybdenum import ATP-binding protein ModC (368 aa).

One can recognise an ABC transporter domain in the interval 1 to 231 (MKGLQVAFKQ…QAMRPWQSFS (231 aa)). 33–40 (GRSGAGKT) serves as a coordination point for ATP. Residues 292-363 (KTSIRNIIEA…IKGVSVTQRD (72 aa)) form the Mop domain.

The protein belongs to the ABC transporter superfamily. Molybdate importer (TC 3.A.1.8) family. As to quaternary structure, the complex is composed of two ATP-binding proteins (ModC), two transmembrane proteins (ModB) and a solute-binding protein (ModA).

It localises to the cell inner membrane. It catalyses the reaction molybdate(out) + ATP + H2O = molybdate(in) + ADP + phosphate + H(+). Its function is as follows. Part of the ABC transporter complex ModABC involved in molybdenum import. Responsible for energy coupling to the transport system. This is Molybdenum import ATP-binding protein ModC from Vibrio vulnificus (strain YJ016).